Consider the following 773-residue polypeptide: Probable dipeptidyl peptidase 4 (773 aa).

Residues 1–18 form the signal peptide; that stretch reads MKLSVLSVLLVSVAQAAA. Asn-37, Asn-80, Asn-112, Asn-220, Asn-471, and Asn-496 each carry an N-linked (GlcNAc...) asparagine glycan. The active-site Charge relay system is Ser-619. An N-linked (GlcNAc...) asparagine glycan is attached at Asn-671. Catalysis depends on charge relay system residues Asp-696 and His-731.

Belongs to the peptidase S9B family.

It is found in the secreted. The enzyme catalyses Release of an N-terminal dipeptide, Xaa-Yaa-|-Zaa-, from a polypeptide, preferentially when Yaa is Pro, provided Zaa is neither Pro nor hydroxyproline.. Its function is as follows. Extracellular dipeptidyl-peptidase which removes N-terminal dipeptides sequentially from polypeptides having unsubstituted N-termini provided that the penultimate residue is proline. This chain is Probable dipeptidyl peptidase 4 (dpp4), found in Emericella nidulans (strain FGSC A4 / ATCC 38163 / CBS 112.46 / NRRL 194 / M139) (Aspergillus nidulans).